A 185-amino-acid polypeptide reads, in one-letter code: Phospholipase A2 inhibitor 25 kDa subunit (185 aa).

Intrachain disulfides connect Cys3/Cys27, Cys6/Cys13, Cys20/Cys48, Cys54/Cys75, Cys76/Cys81, Cys101/Cys126, Cys119/Cys146, and Cys152/Cys172.

It belongs to the CNF-like-inhibitor family. As to quaternary structure, heterodimer with phospholipase A2 inhibitor 31 kDa. As to expression, expressed by the liver.

It localises to the secreted. Functionally, inhibits the enzymatic activity of phospholipase A2. This chain is Phospholipase A2 inhibitor 25 kDa subunit, found in Naja kaouthia (Monocled cobra).